Reading from the N-terminus, the 120-residue chain is NAD(P)H-quinone oxidoreductase subunit 3, chloroplastic (120 aa).

3 helical membrane-spanning segments follow: residues 10–30, 64–84, and 89–109; these read LWFF…ISEI, MFAL…PWAI, and LGIS…VGLV.

The protein belongs to the complex I subunit 3 family. NDH is composed of at least 16 different subunits, 5 of which are encoded in the nucleus.

Its subcellular location is the plastid. It is found in the chloroplast thylakoid membrane. The enzyme catalyses a plastoquinone + NADH + (n+1) H(+)(in) = a plastoquinol + NAD(+) + n H(+)(out). It catalyses the reaction a plastoquinone + NADPH + (n+1) H(+)(in) = a plastoquinol + NADP(+) + n H(+)(out). Its function is as follows. NDH shuttles electrons from NAD(P)H:plastoquinone, via FMN and iron-sulfur (Fe-S) centers, to quinones in the photosynthetic chain and possibly in a chloroplast respiratory chain. The immediate electron acceptor for the enzyme in this species is believed to be plastoquinone. Couples the redox reaction to proton translocation, and thus conserves the redox energy in a proton gradient. In Chara vulgaris (Common stonewort), this protein is NAD(P)H-quinone oxidoreductase subunit 3, chloroplastic.